The chain runs to 245 residues: Probable transcriptional regulatory protein Cbei_4222 (245 aa).

It belongs to the TACO1 family.

It is found in the cytoplasm. The sequence is that of Probable transcriptional regulatory protein Cbei_4222 from Clostridium beijerinckii (strain ATCC 51743 / NCIMB 8052) (Clostridium acetobutylicum).